The primary structure comprises 474 residues: Aspartyl/glutamyl-tRNA(Asn/Gln) amidotransferase subunit B (474 aa).

The protein belongs to the GatB/GatE family. GatB subfamily. In terms of assembly, heterotrimer of A, B and C subunits.

It carries out the reaction L-glutamyl-tRNA(Gln) + L-glutamine + ATP + H2O = L-glutaminyl-tRNA(Gln) + L-glutamate + ADP + phosphate + H(+). The catalysed reaction is L-aspartyl-tRNA(Asn) + L-glutamine + ATP + H2O = L-asparaginyl-tRNA(Asn) + L-glutamate + ADP + phosphate + 2 H(+). Allows the formation of correctly charged Asn-tRNA(Asn) or Gln-tRNA(Gln) through the transamidation of misacylated Asp-tRNA(Asn) or Glu-tRNA(Gln) in organisms which lack either or both of asparaginyl-tRNA or glutaminyl-tRNA synthetases. The reaction takes place in the presence of glutamine and ATP through an activated phospho-Asp-tRNA(Asn) or phospho-Glu-tRNA(Gln). The protein is Aspartyl/glutamyl-tRNA(Asn/Gln) amidotransferase subunit B of Wolbachia sp. subsp. Brugia malayi (strain TRS).